The sequence spans 225 residues: Enolase-phosphatase E1 (225 aa).

It belongs to the HAD-like hydrolase superfamily. MasA/MtnC family. In terms of assembly, monomer. Mg(2+) serves as cofactor.

It catalyses the reaction 5-methylsulfanyl-2,3-dioxopentyl phosphate + H2O = 1,2-dihydroxy-5-(methylsulfanyl)pent-1-en-3-one + phosphate. Its pathway is amino-acid biosynthesis; L-methionine biosynthesis via salvage pathway; L-methionine from S-methyl-5-thio-alpha-D-ribose 1-phosphate: step 3/6. It functions in the pathway amino-acid biosynthesis; L-methionine biosynthesis via salvage pathway; L-methionine from S-methyl-5-thio-alpha-D-ribose 1-phosphate: step 4/6. Its function is as follows. Bifunctional enzyme that catalyzes the enolization of 2,3-diketo-5-methylthiopentyl-1-phosphate (DK-MTP-1-P) into the intermediate 2-hydroxy-3-keto-5-methylthiopentenyl-1-phosphate (HK-MTPenyl-1-P), which is then dephosphorylated to form the acireductone 1,2-dihydroxy-3-keto-5-methylthiopentene (DHK-MTPene). This Shewanella woodyi (strain ATCC 51908 / MS32) protein is Enolase-phosphatase E1.